We begin with the raw amino-acid sequence, 234 residues long: MKDQKVIVALDYDNQADALTFVDKIDPSSCRLKVGKEMFTLFGPEFVKELHKRGFSVFLDLKFHDIPNTCSKAVRAAAEMGVWMVNVHASGGERMMSASREILEPYGSDRPLLIGVTVLTSMEQQDLAGIGLDIAPQEQVKRLAALTKNSGLDGVVCSAQEASMLKADLGKEFQLVTPGIRPAGADVGDQKRIMTPVDAITAGSDYLVIGRPITQAENPSQVLNEINLSLASVL.

Substrate-binding positions include D11, K33, 60–69 (DLKFHDIPNT), T120, R181, Q190, G210, and R211. The active-site Proton donor is K62.

This sequence belongs to the OMP decarboxylase family. Type 1 subfamily. In terms of assembly, homodimer.

The enzyme catalyses orotidine 5'-phosphate + H(+) = UMP + CO2. It participates in pyrimidine metabolism; UMP biosynthesis via de novo pathway; UMP from orotate: step 2/2. In terms of biological role, catalyzes the decarboxylation of orotidine 5'-monophosphate (OMP) to uridine 5'-monophosphate (UMP). The polypeptide is Orotidine 5'-phosphate decarboxylase (Aliivibrio fischeri (strain ATCC 700601 / ES114) (Vibrio fischeri)).